Reading from the N-terminus, the 475-residue chain is 3-isopropylmalate dehydratase large subunit (475 aa).

[4Fe-4S] cluster contacts are provided by Cys-348, Cys-408, and Cys-411.

This sequence belongs to the aconitase/IPM isomerase family. LeuC type 1 subfamily. In terms of assembly, heterodimer of LeuC and LeuD. Requires [4Fe-4S] cluster as cofactor.

The enzyme catalyses (2R,3S)-3-isopropylmalate = (2S)-2-isopropylmalate. The protein operates within amino-acid biosynthesis; L-leucine biosynthesis; L-leucine from 3-methyl-2-oxobutanoate: step 2/4. In terms of biological role, catalyzes the isomerization between 2-isopropylmalate and 3-isopropylmalate, via the formation of 2-isopropylmaleate. The chain is 3-isopropylmalate dehydratase large subunit from Acidobacterium capsulatum (strain ATCC 51196 / DSM 11244 / BCRC 80197 / JCM 7670 / NBRC 15755 / NCIMB 13165 / 161).